The primary structure comprises 215 residues: UPF0502 protein YceH (215 aa).

An N6-acetyllysine modification is found at K80.

It belongs to the UPF0502 family.

In Shigella sonnei (strain Ss046), this protein is UPF0502 protein YceH.